A 127-amino-acid chain; its full sequence is Nuclear transport factor 2 (127 aa).

An N6-acetyllysine modification is found at lysine 4. The NTF2 domain occupies 10–121 (IGSSFIQHYY…WVCTNDMFRL (112 aa)).

In terms of assembly, homodimer. Interacts with RAN (GDP-bound form); the interaction is direct and regulates RAN nuclear import. Interacts with the nucleoporins NUP54, NUP58 and NUP62 (via FG repeats); recruits NUTF2 to the nuclear pore complex a step required for NUTF2-mediated GDP-bound RAN nuclear import. Interacts with CAPG; mediates its nuclear import.

The protein localises to the cytoplasm. The protein resides in the cytosol. Its subcellular location is the nucleus outer membrane. It is found in the nucleus. It localises to the nuclear pore complex. The protein localises to the nucleus inner membrane. The protein resides in the nucleoplasm. Mediates the import of GDP-bound RAN from the cytoplasm into the nucleus which is essential for the function of RAN in cargo receptor-mediated nucleocytoplasmic transport. Thereby, plays indirectly a more general role in cargo receptor-mediated nucleocytoplasmic transport. Interacts with GDP-bound RAN in the cytosol, recruits it to the nuclear pore complex via its interaction with nucleoporins and promotes its nuclear import. The chain is Nuclear transport factor 2 from Bos taurus (Bovine).